We begin with the raw amino-acid sequence, 285 residues long: 2-dehydro-3-deoxyphosphooctonate aldolase (285 aa).

This sequence belongs to the KdsA family.

The protein resides in the cytoplasm. The catalysed reaction is D-arabinose 5-phosphate + phosphoenolpyruvate + H2O = 3-deoxy-alpha-D-manno-2-octulosonate-8-phosphate + phosphate. The protein operates within carbohydrate biosynthesis; 3-deoxy-D-manno-octulosonate biosynthesis; 3-deoxy-D-manno-octulosonate from D-ribulose 5-phosphate: step 2/3. It participates in bacterial outer membrane biogenesis; lipopolysaccharide biosynthesis. The protein is 2-dehydro-3-deoxyphosphooctonate aldolase of Acinetobacter baumannii (strain AB307-0294).